Here is a 534-residue protein sequence, read N- to C-terminus: NAD(P)H-quinone oxidoreductase chain 4 2 (534 aa).

Helical transmembrane passes span 6 to 26, 38 to 58, 93 to 113, 117 to 137, 138 to 158, 171 to 191, 210 to 230, 245 to 265, 279 to 299, 313 to 333, 335 to 355, 377 to 399, and 419 to 439; these read FPWL…IPLL, WYSL…FWTS, LILL…PVTF, FFYF…AVQD, LLVF…LLAI, FILY…AMAF, IGFQ…KLPI, TAPV…YALF, FAPI…LTSF, ISHM…GLSG, MLQM…VGAT, MFAM…GFVA, and VVVI…LLSM.

Belongs to the complex I subunit 4 family.

It localises to the cellular thylakoid membrane. It catalyses the reaction a plastoquinone + NADH + (n+1) H(+)(in) = a plastoquinol + NAD(+) + n H(+)(out). It carries out the reaction a plastoquinone + NADPH + (n+1) H(+)(in) = a plastoquinol + NADP(+) + n H(+)(out). In terms of biological role, NDH-1 shuttles electrons from NAD(P)H, via FMN and iron-sulfur (Fe-S) centers, to quinones in the respiratory chain. The immediate electron acceptor for the enzyme in this species is believed to be plastoquinone. Couples the redox reaction to proton translocation (for every two electrons transferred, four hydrogen ions are translocated across the cytoplasmic membrane), and thus conserves the redox energy in a proton gradient. The sequence is that of NAD(P)H-quinone oxidoreductase chain 4 2 from Synechococcus elongatus (strain ATCC 33912 / PCC 7942 / FACHB-805) (Anacystis nidulans R2).